We begin with the raw amino-acid sequence, 505 residues long: Serine carboxypeptidase-like 47 (505 aa).

An N-terminal signal peptide occupies residues Met1–Ser22. N-linked (GlcNAc...) asparagine glycans are attached at residues Asn37, Asn86, and Asn122. Cystine bridges form between Cys138–Cys378, Cys306–Cys321, and Cys344–Cys349. Residue Ser228 is part of the active site. A glycan (N-linked (GlcNAc...) asparagine) is linked at Asn301. Asp416 is an active-site residue. 2 N-linked (GlcNAc...) asparagine glycosylation sites follow: Asn432 and Asn444. His473 is an active-site residue.

Belongs to the peptidase S10 family. Expressed in roots, flowers and siliques.

It is found in the secreted. Its function is as follows. Probable carboxypeptidase. The polypeptide is Serine carboxypeptidase-like 47 (SCPL47) (Arabidopsis thaliana (Mouse-ear cress)).